Consider the following 591-residue polypeptide: V-type ATP synthase alpha chain (591 aa).

Residue 242–249 (GPFGAGKT) coordinates ATP.

Belongs to the ATPase alpha/beta chains family.

The catalysed reaction is ATP + H2O + 4 H(+)(in) = ADP + phosphate + 5 H(+)(out). Its function is as follows. Produces ATP from ADP in the presence of a proton gradient across the membrane. The V-type alpha chain is a catalytic subunit. In Chlamydia caviae (strain ATCC VR-813 / DSM 19441 / 03DC25 / GPIC) (Chlamydophila caviae), this protein is V-type ATP synthase alpha chain.